The sequence spans 352 residues: MDPISNDSSEITYDYSDGTPNPDMPADGVYIPKMEPGDIAALIIYLAVFLVGVTGNALVVWVTAFEAKRTVNAIWFLNLAVADLLSCLALPILFTSIVKHNHWPFGDQACIVLPSLILLNMYSSILLLATISADRFLLVFKPIWCQKFRRPGLAWMACGVTWVLALLLTIPSFVFRRIHKDPYSDSILCNIDYSKGPFFIEKAIAILRLMVGFVLPLLTLNICYTFLLIRTWSRKATRSTKTLKVVMAVVTCFFVFWLPYQVTGVILAWLPRSSSTFQSVERLNSLCVSLAYINCCVNPIIYVMAGQGFHGRLRRSLPSIIRNVLSEDSLGRDSKSFTRSTMDTSTQKSQAV.

Over residues 1-11 (MDPISNDSSEI) the composition is skewed to polar residues. The disordered stretch occupies residues 1 to 20 (MDPISNDSSEITYDYSDGTP). At 1-38 (MDPISNDSSEITYDYSDGTPNPDMPADGVYIPKMEPGD) the chain is on the extracellular side. N-linked (GlcNAc...) asparagine glycosylation occurs at Asn-6. 2 positions are modified to sulfotyrosine: Tyr-13 and Tyr-15. The helical transmembrane segment at 39-65 (IAALIIYLAVFLVGVTGNALVVWVTAF) threads the bilayer. Residues 66-70 (EAKRT) are Cytoplasmic-facing. The chain crosses the membrane as a helical span at residues 71-94 (VNAIWFLNLAVADLLSCLALPILF). Residues 95-111 (TSIVKHNHWPFGDQACI) lie on the Extracellular side of the membrane. Residues Cys-110 and Cys-189 are joined by a disulfide bond. A helical membrane pass occupies residues 112–133 (VLPSLILLNMYSSILLLATISA). Topologically, residues 134–154 (DRFLLVFKPIWCQKFRRPGLA) are cytoplasmic. The helical transmembrane segment at 155–175 (WMACGVTWVLALLLTIPSFVF) threads the bilayer. The Extracellular segment spans residues 176–202 (RRIHKDPYSDSILCNIDYSKGPFFIEK). A helical transmembrane segment spans residues 203–228 (AIAILRLMVGFVLPLLTLNICYTFLL). Topologically, residues 229–244 (IRTWSRKATRSTKTLK) are cytoplasmic. A helical transmembrane segment spans residues 245–267 (VVMAVVTCFFVFWLPYQVTGVIL). Topologically, residues 268–284 (AWLPRSSSTFQSVERLN) are extracellular. A helical transmembrane segment spans residues 285–305 (SLCVSLAYINCCVNPIIYVMA). The Cytoplasmic segment spans residues 306–352 (GQGFHGRLRRSLPSIIRNVLSEDSLGRDSKSFTRSTMDTSTQKSQAV). Phosphoserine occurs at positions 316, 319, 326, 329, 334, 336, and 340. The interval 332 to 352 (RDSKSFTRSTMDTSTQKSQAV) is disordered. Over residues 337–352 (FTRSTMDTSTQKSQAV) the composition is skewed to polar residues.

It belongs to the G-protein coupled receptor 1 family. As to quaternary structure, homodimer. May also form higher-order oligomers. Interacts (when phosphorylated) with ARRB1 and ARRB2; the interaction is associated with internalization of C5aR. Post-translationally, sulfation plays a critical role in the association of C5aR with C5a, but no significant role in the ability of the receptor to transduce a signal and mobilize calcium in response to a small peptide agonist. In terms of processing, phosphorylated on serine residues in response to C5a binding, resulting in internalization of the receptor and short-term desensitization to the ligand.

The protein resides in the cell membrane. It localises to the cytoplasmic vesicle. Its function is as follows. Receptor for the chemotactic and inflammatory peptide anaphylatoxin C5a. The ligand interacts with at least two sites on the receptor: a high-affinity site on the extracellular N-terminus, and a second site in the transmembrane region which activates downstream signaling events. Receptor activation stimulates chemotaxis, granule enzyme release, intracellular calcium release and superoxide anion production. The sequence is that of C5a anaphylatoxin chemotactic receptor 1 (C5ar1) from Rattus norvegicus (Rat).